We begin with the raw amino-acid sequence, 626 residues long: Cysteine desulfurase (626 aa).

2 disordered regions span residues Met-1–Phe-21 and Ala-41–Ser-64. Positions Met-1–Gln-225 are cargo-loading domain. The interval Val-226–Leu-626 is cysteine desulfurase domain. The residue at position 444 (Lys-444) is an N6-(pyridoxal phosphate)lysine. Cys-582 acts as the Cysteine persulfide intermediate in catalysis.

Belongs to the class-V pyridoxal-phosphate-dependent aminotransferase family. Csd subfamily. As to quaternary structure, there are 1-2 copies of this protein in each type 2A encapsulin shell. It depends on pyridoxal 5'-phosphate as a cofactor.

The protein localises to the encapsulin nanocompartment. It carries out the reaction (sulfur carrier)-H + L-cysteine = (sulfur carrier)-SH + L-alanine. With respect to regulation, encapsulated enzyme is 7-fold more active than encapsulated enzyme. Its function is as follows. Cargo protein of a type 2A encapsulin nanocompartment probably involved in sulfur metabolism. Cysteine desulfurases mobilize the sulfur from L-cysteine to yield L-alanine, an essential step in sulfur metabolism for biosynthesis of a variety of sulfur-containing biomolecules. This is Cysteine desulfurase from Synechococcus elongatus (strain ATCC 33912 / PCC 7942 / FACHB-805) (Anacystis nidulans R2).